A 145-amino-acid polypeptide reads, in one-letter code: Ribonuclease P protein component (145 aa).

The span at 120–130 (LPAAPGTMPPA) shows a compositional bias: low complexity. Residues 120–145 (LPAAPGTMPPARTMHPSSLSPTEPDL) form a disordered region. Residues 134–145 (HPSSLSPTEPDL) show a composition bias toward polar residues.

It belongs to the RnpA family. Consists of a catalytic RNA component (M1 or rnpB) and a protein subunit.

The enzyme catalyses Endonucleolytic cleavage of RNA, removing 5'-extranucleotides from tRNA precursor.. Functionally, RNaseP catalyzes the removal of the 5'-leader sequence from pre-tRNA to produce the mature 5'-terminus. It can also cleave other RNA substrates such as 4.5S RNA. The protein component plays an auxiliary but essential role in vivo by binding to the 5'-leader sequence and broadening the substrate specificity of the ribozyme. In Xanthomonas oryzae pv. oryzae (strain MAFF 311018), this protein is Ribonuclease P protein component.